The chain runs to 171 residues: Tetratricopeptide repeat protein 9C (171 aa).

TPR repeat units follow at residues 8-41 (AQVY…LRGL), 72-107 (THCY…QPDN), and 108-141 (AKAL…QPKD).

Belongs to the TTC9 family.

The chain is Tetratricopeptide repeat protein 9C (Ttc9c) from Mus musculus (Mouse).